The primary structure comprises 513 residues: Putative ribose/galactose/methyl galactoside import ATP-binding protein 2 (513 aa).

ABC transporter domains follow at residues 24 to 260 and 270 to 510; these read LAAD…VGRE and VPIG…VMDL. 56-63 serves as a coordination point for ATP; that stretch reads GENGAGKS.

It belongs to the ABC transporter superfamily. Carbohydrate importer 2 (CUT2) (TC 3.A.1.2) family.

The protein localises to the cell inner membrane. The enzyme catalyses D-ribose(out) + ATP + H2O = D-ribose(in) + ADP + phosphate + H(+). It catalyses the reaction D-galactose(out) + ATP + H2O = D-galactose(in) + ADP + phosphate + H(+). In terms of biological role, part of an ABC transporter complex involved in carbohydrate import. Could be involved in ribose, galactose and/or methyl galactoside import. Responsible for energy coupling to the transport system. In Agrobacterium fabrum (strain C58 / ATCC 33970) (Agrobacterium tumefaciens (strain C58)), this protein is Putative ribose/galactose/methyl galactoside import ATP-binding protein 2.